We begin with the raw amino-acid sequence, 78 residues long: Large ribosomal subunit protein bL28 (78 aa).

The disordered stretch occupies residues 1–26 (MARVCQVTGKRPMSGHNVSHANNKTK).

Belongs to the bacterial ribosomal protein bL28 family.

The protein is Large ribosomal subunit protein bL28 of Nitrosomonas europaea (strain ATCC 19718 / CIP 103999 / KCTC 2705 / NBRC 14298).